We begin with the raw amino-acid sequence, 312 residues long: Very long chain fatty acid elongase 4 (312 aa).

Asn-20 carries an N-linked (GlcNAc...) asparagine glycan. 7 helical membrane passes run 42-62 (LMQSPWPTISISTLYLLFVWL), 78-98 (VLIIYNFGMVLLNLFIFRELF), 127-147 (ALWWYFVSKGVEYLDTVFFIL), 165-185 (MFTLWWIGIKWVAGGQAFFGA), 188-208 (NSFIHVIMYSYYGLTAFGPWI), 217-237 (YLTMLQLVQFHVTIGHTALSL), and 246-266 (WMHWALIAYAISFIFLFLNFY). A compositionally biased stretch (polar residues) spans 273-292 (PKQSKTGKTATNGISSNGVN). The interval 273–312 (PKQSKTGKTATNGISSNGVNKSEKALENGKPQKNGKPKGE) is disordered. Asn-292 carries an N-linked (GlcNAc...) asparagine glycan. The short motif at 308-312 (KPKGE) is the Di-lysine motif element.

This sequence belongs to the ELO family. ELOVL4 subfamily. Oligomer. Post-translationally, N-glycosylated. In terms of tissue distribution, expressed in the retina, exclusively in photoreceptor cells and in the brain, skin, testis and lens.

It localises to the endoplasmic reticulum membrane. It carries out the reaction a very-long-chain acyl-CoA + malonyl-CoA + H(+) = a very-long-chain 3-oxoacyl-CoA + CO2 + CoA. The catalysed reaction is hexacosanoyl-CoA + malonyl-CoA + H(+) = 3-oxooctacosanyol-CoA + CO2 + CoA. It catalyses the reaction octacosanoyl-CoA + malonyl-CoA + H(+) = 3-oxo-triacontanoyl-CoA + CO2 + CoA. The enzyme catalyses triacontanoyl-CoA + malonyl-CoA + H(+) = 3-oxo-dotriacontanoyl-CoA + CO2 + CoA. It carries out the reaction (19Z,22Z,25Z,28Z,31Z)-tetratriacontapentaenoyl-CoA + malonyl-CoA + H(+) = 3-oxo-(21Z,24Z,27Z,30Z,33Z)-hexatriacontapentaenoyl-CoA + CO2 + CoA. The catalysed reaction is (4Z,7Z,10Z,13Z,16Z,19Z)-docosahexaenoyl-CoA + malonyl-CoA + H(+) = 3-oxo-(6Z,9Z,12Z,15Z,18Z,21Z)-tetracosahexaenoyl-CoA + CO2 + CoA. It catalyses the reaction (7Z,10Z,13Z,16Z)-docosatetraenoyl-CoA + malonyl-CoA + H(+) = (9Z,12Z,15Z,18Z)-3-oxotetracosatetraenoyl-CoA + CO2 + CoA. The enzyme catalyses (11Z,14Z,17Z,20Z,23Z)-hexacosapentaenoyl-CoA + malonyl-CoA + H(+) = 3-oxo-(13Z,16Z,19Z,22Z,25Z)-octacosapentaenoyl-CoA + CO2 + CoA. It carries out the reaction (13Z,16Z,19Z,22Z,25Z)-octacosapentaenoyl-CoA + malonyl-CoA + H(+) = 3-oxo-(15Z,18Z,21Z,24Z,27Z)-triacontapentaenoyl-CoA + CO2 + CoA. The catalysed reaction is (15Z,18Z,21Z,24Z,27Z)-triacontapentaenoyl-CoA + malonyl-CoA + H(+) = 3-oxo-(17Z,20Z,23Z,26Z,29Z)-dotriacontapentaenoyl-CoA + CO2 + CoA. It catalyses the reaction (17Z,20Z,23Z,26Z,29Z)-dotriacontapentaenoyl-CoA + malonyl-CoA + H(+) = 3-oxo-(19Z,22Z,25Z,28Z,31Z)-tetratriacontapentaenoyl-CoA + CO2 + CoA. The enzyme catalyses (21Z,24Z,27Z,30Z,33Z)-hexatriacontapentaenoyl-CoA + malonyl-CoA + H(+) = 3-oxo-(23Z,26Z,29Z,32Z,35Z)-octatriacontapentaenoyl-CoA + CO2 + CoA. It carries out the reaction (11Z,14Z,17Z,20Z)-hexacosatetraenoyl-CoA + malonyl-CoA + H(+) = (13Z,16Z,19Z,22Z)-3-oxooctacosatetraenoyl-CoA + CO2 + CoA. The catalysed reaction is (13Z,16Z,19Z,22Z)-octacosatetraenoyl-CoA + malonyl-CoA + H(+) = 3-oxo-(15Z,18Z,21Z,24Z)-triacontatetraenoyl-CoA + CO2 + CoA. It catalyses the reaction (15Z,18Z,21Z,24Z)-triacontatetraenoyl-CoA + malonyl-CoA + H(+) = 3-oxo-(17Z,20Z,23Z,26Z)-dotriacontatetraenoyl-CoA + CO2 + CoA. The enzyme catalyses (17Z,20Z,23Z,26Z)-dotriacontatetraenoyl-CoA + malonyl-CoA + H(+) = 3-oxo-(19Z,22Z,25Z,28Z)-tetratriacontatetraenoyl-CoA + CO2 + CoA. It carries out the reaction (19Z,22Z,25Z,28Z)-tetratriacontatetraenoyl-CoA + malonyl-CoA + H(+) = 3-oxo-(21Z,24Z,27Z,30Z)-hexatriacontatetraenoyl-CoA + CO2 + CoA. The catalysed reaction is (21Z,24Z,27Z,30Z)-hexatriacontatetraenoyl-CoA + malonyl-CoA + H(+) = 3-oxo-(23Z,26Z,29Z,32Z)-octatriacontatetraenoyl-CoA + CO2 + CoA. It catalyses the reaction (6Z,9Z,12Z,15Z,18Z,21Z)-tetracosahexaenoyl-CoA + malonyl-CoA + H(+) = 3-oxo-(8Z,11Z,14Z,17Z,20Z,23Z)-hexacosahexaenoyl-CoA + CO2 + CoA. The enzyme catalyses (8Z,11Z,14Z,17Z,20Z,23Z)-hexacosahexaenoyl-CoA + malonyl-CoA + H(+) = 3-oxo-(10Z,13Z,16Z,19Z,22Z,25Z)-octacosahexaenoyl-CoA + CO2 + CoA. It carries out the reaction (10Z,13Z,16Z,19Z,22Z,25Z)-octacosahexaenoyl-CoA + malonyl-CoA + H(+) = 3-oxo-(12Z,15Z,18Z,21Z,24Z,27Z)-triacontahexaenoyl-CoA + CO2 + CoA. The catalysed reaction is (12Z,15Z,18Z,21Z,24Z,27Z)-triacontahexaenoyl-CoA + malonyl-CoA + H(+) = 3-oxo-(14Z,17Z,20Z,23Z,26Z,29Z)-dotriacontahexaenoyl-CoA + CO2 + CoA. It catalyses the reaction (14Z,17Z,20Z,23Z,26Z,29Z)-dotriacontahexaenoyl-CoA + malonyl-CoA + H(+) = 3-oxo-(16Z,19Z,22Z,25Z,28Z,31Z)-tetratriacontahexaenoyl-CoA + CO2 + CoA. The enzyme catalyses (16Z,19Z,22Z,25Z,28Z,31Z)-tetratriacontahexaenoyl-CoA + malonyl-CoA + H(+) = 3-oxo-(18Z,21Z,24Z,27Z,30Z,33Z)-hexatriacontahexaenoyl-CoA + CO2 + CoA. It carries out the reaction (9Z,12Z,15Z,18Z,21Z)-tetracosapentaenoyl-CoA + malonyl-CoA + H(+) = 3-oxo-(11Z,14Z,17Z,20Z,23Z)-hexacosapentaenoyl-CoA + CO2 + CoA. The protein operates within lipid metabolism; fatty acid biosynthesis. Functionally, catalyzes the first and rate-limiting reaction of the four reactions that constitute the long-chain fatty acids elongation cycle. This endoplasmic reticulum-bound enzymatic process allows the addition of 2 carbons to the chain of long- and very long-chain fatty acids (VLCFAs) per cycle. Condensing enzyme that catalyzes the synthesis of very long chain saturated (VLC-SFA) and polyunsaturated (PUFA) fatty acids that are involved in multiple biological processes as precursors of membrane lipids and lipid mediators. May play a critical role in early brain and skin development. The chain is Very long chain fatty acid elongase 4 from Mus musculus (Mouse).